Here is a 444-residue protein sequence, read N- to C-terminus: N-succinylarginine dihydrolase (444 aa).

Substrate is bound by residues serine 19–serine 28, asparagine 110, and histidine 137–arginine 138. The active site involves glutamate 174. Arginine 214 contributes to the substrate binding site. The active site involves histidine 250. Aspartate 252 and asparagine 362 together coordinate substrate. Cysteine 368 acts as the Nucleophile in catalysis.

This sequence belongs to the succinylarginine dihydrolase family. Homodimer.

It carries out the reaction N(2)-succinyl-L-arginine + 2 H2O + 2 H(+) = N(2)-succinyl-L-ornithine + 2 NH4(+) + CO2. It functions in the pathway amino-acid degradation; L-arginine degradation via AST pathway; L-glutamate and succinate from L-arginine: step 2/5. Functionally, catalyzes the hydrolysis of N(2)-succinylarginine into N(2)-succinylornithine, ammonia and CO(2). This chain is N-succinylarginine dihydrolase, found in Aliivibrio fischeri (strain ATCC 700601 / ES114) (Vibrio fischeri).